A 621-amino-acid polypeptide reads, in one-letter code: MKQEKKKFDAEVGKILNLMIHSLYSNKEIFMRELISNASDACDKLRYLSQSEAELVAGDSNFKITVKGDKNNGQVIIRDNGIGMNKEDLIENLGTIARSGTANFLKNLSGDSKKDNMLIGQFGVGFYSSFMVADKVTVTSRKAGEDKVYVWESEGEGEYIVSSSDREFSRGTEIALHIKKEEDSFLDHFRLKHIVKSYSDHIAVPIYFFDEGDNNEIQLNSASALWTRSKSEITEEQYKEFYKSLSYAVDDPWVTMHNKNEGAIEFTNLLFIPSSKTYDLFHPDRKRRVKLYIKRVFISDENIDLIPSYLRFLRGVVDSEDLPLNISRESLQHNNVLEKIKNAITKRVLGELKKKKEDSPDEYNNFWANFGGALKEGLCEATTDHEKLLEVCIFRSALHNKMISLDEYIKGFKEGQNTIYYLSGDNPDKLLSSPQIEGLLSKNIDVLLFTDTVDDFWVNVNSEYKGHTIKSATRSDIDVDQATSSSEEKNKDDKKSDDEYKSLTDYFKEVLGILVKDVKISKKLTSSPACLAVSEAAMDIRMERFLIEQKQIANASAKNLELNPKNKIIEKIFNDLKANNKNNEELVKLIFDQACILEGEPVADTGAFSKRLNDIVQKAIL.

An a; substrate-binding region spans residues 1-328; that stretch reads MKQEKKKFDA…SEDLPLNISR (328 aa). Residues 329-544 are b; sequence ESLQHNNVLE…EAAMDIRMER (216 aa). Positions 478-498 are disordered; sequence DVDQATSSSEEKNKDDKKSDD. Positions 486 to 498 are enriched in basic and acidic residues; it reads SEEKNKDDKKSDD. The tract at residues 545-621 is c; sequence FLIEQKQIAN…LNDIVQKAIL (77 aa).

The protein belongs to the heat shock protein 90 family. Homodimer.

It localises to the cytoplasm. Functionally, molecular chaperone. Has ATPase activity. The polypeptide is Chaperone protein HtpG (Rickettsia bellii (strain RML369-C)).